We begin with the raw amino-acid sequence, 387 residues long: Beta-citrylglutamate synthase B (387 aa).

The ATP-grasp domain maps to 119–304 (FQELAGHGVP…VAGIIADYAA (186 aa)). Residues K158, 193–203 (QKYIKESHGRD), and R219 each bind ATP. Mg(2+)-binding residues include D264, E277, and N279. The Mn(2+) site is built by D264, E277, and N279. Residues 325–361 (ASETSEPELGPPASAAVDNMSASSSSVDSDPESTTER) are disordered. Positions 337–352 (ASAAVDNMSASSSSVD) are enriched in low complexity.

The protein belongs to the RimK family. Mg(2+) serves as cofactor. It depends on Mn(2+) as a cofactor. In terms of tissue distribution, strongly expressed in brain and testis. Expressed in eyes, thymus, lung, kidney, skeletal muscle, spleen, skin and heart. Expressed in neurons of the neocortex, the gray matter and Purkinje cells.

The protein resides in the cytoplasm. The enzyme catalyses citrate + L-glutamate + ATP = beta-citrylglutamate + ADP + phosphate + H(+). It carries out the reaction N-acetyl-L-aspartate + L-glutamate + ATP = N-acetyl-L-aspartyl-L-glutamate + ADP + phosphate + H(+). Functionally, catalyzes the synthesis of beta-citryl-L-glutamate and N-acetyl-L-aspartyl-L-glutamate. Beta-citryl-L-glutamate is synthesized more efficiently than N-acetyl-L-aspartyl-L-glutamate. The chain is Beta-citrylglutamate synthase B (Rimklb) from Mus musculus (Mouse).